Reading from the N-terminus, the 103-residue chain is Glycoprotein 24B (103 aa).

This sequence belongs to the csb family. O-glycosylated.

It localises to the cell surface. In terms of biological role, cell-cell adhesion during early development. The protein is Glycoprotein 24B (csbB) of Dictyostelium discoideum (Social amoeba).